We begin with the raw amino-acid sequence, 557 residues long: uncharacterized protein (557 aa).

An N-terminal signal peptide occupies residues M1–A30. C31 is lipidated: N-palmitoyl cysteine. A lipid anchor (S-diacylglycerol cysteine) is attached at C31.

This sequence to M.bovis Mb2616c and M.leprae ML0489.

The protein localises to the cell membrane. This is an uncharacterized protein from Mycobacterium tuberculosis (strain ATCC 25618 / H37Rv).